A 118-amino-acid chain; its full sequence is Holo-[acyl-carrier-protein] synthase (118 aa).

Residues Asp8 and Glu50 each coordinate Mg(2+).

It belongs to the P-Pant transferase superfamily. AcpS family. Requires Mg(2+) as cofactor.

Its subcellular location is the cytoplasm. The catalysed reaction is apo-[ACP] + CoA = holo-[ACP] + adenosine 3',5'-bisphosphate + H(+). Transfers the 4'-phosphopantetheine moiety from coenzyme A to a Ser of acyl-carrier-protein. The protein is Holo-[acyl-carrier-protein] synthase of Leifsonia xyli subsp. xyli (strain CTCB07).